Here is a 661-residue protein sequence, read N- to C-terminus: PAN2-PAN3 deadenylation complex subunit pan3 (661 aa).

2 disordered regions span residues 1 to 29 and 53 to 131; these read MASV…NAKD and DPHK…RQDA. A C3H1-type zinc finger spans residues 26–55; that stretch reads NAKDTLCRNVTIYGRCRYEDKGCAFNHDPH. A PABPC-interacting motif-2 (PAM-2) motif is present at residues 63 to 83; sequence NASKKRFNVDSPSFTPSLLPS. The segment covering 77–104 has biased composition (low complexity); the sequence is TPSLLPSNGSSPTSSSSSLKKSSTISPK. The span at 115-126 shows a compositional bias: polar residues; the sequence is TAASRSNTSTPG. A pseudokinase domain region spans residues 263–524; sequence QTLPNTQLPA…NIDILINGIS (262 aa). Residues Arg-315, 364–371, and 424–425 each bind ATP; these read DYHPLSKT and SK. A coiled-coil region spans residues 525–563; the sequence is SQLMSTFDSALHLDDQLTSDLGRELENGRLVRLLTKLNF. Positions 564-661 are knob domain; that stretch reads INERPEHEHD…ALLRPSRRPH (98 aa).

The protein belongs to the protein kinase superfamily. PAN3 family. In terms of assembly, homodimer. Forms a heterotrimer with a catalytic subunit pan2 to form the poly(a)-nuclease (PAN) deadenylation complex. Interacts (via PAM-2 motif) with poly(A)-binding protein pab1 (via PABC domain), conferring substrate specificity of the enzyme complex.

The protein localises to the cytoplasm. Functionally, regulatory subunit of the poly(A)-nuclease (PAN) deadenylation complex, one of two cytoplasmic mRNA deadenylases involved in mRNA turnover. PAN specifically shortens poly(A) tails of RNA and the activity is stimulated by poly(A)-binding protein pab1. PAN deadenylation is followed by rapid degradation of the shortened mRNA tails by the CCR4-NOT complex. Deadenylated mRNAs are then degraded by two alternative mechanisms, namely exosome-mediated 3'-5' exonucleolytic degradation, or deadenylation-dependent mRNA decaping and subsequent 5'-3' exonucleolytic degradation by XRN1. May also be involved in post-transcriptional maturation of mRNA poly(A) tails. pan3 acts as a positive regulator for PAN activity, recruiting the catalytic subunit pan2 to mRNA via its interaction with RNA and with pab1. In Emericella nidulans (strain FGSC A4 / ATCC 38163 / CBS 112.46 / NRRL 194 / M139) (Aspergillus nidulans), this protein is PAN2-PAN3 deadenylation complex subunit pan3.